The primary structure comprises 993 residues: Replication protein 1a (993 aa).

The interval 50–408 is methyltransferase; sequence RNALDVKDSE…TIVINGMAMQ (359 aa). In terms of domain architecture, Alphavirus-like MT spans 72-289; that stretch reads HLTQQEQAPH…HKWENVKSFL (218 aa). The segment at 525 to 581 is disordered; sequence AEDRKQKAEAASQIPVDEIPDDTAESSDDTPREADTNQKSEPSSPELETLSTQTRSP. Residues 542 to 552 are compositionally biased toward acidic residues; it reads EIPDDTAESSD. The span at 553–562 shows a compositional bias: basic and acidic residues; that stretch reads DTPREADTNQ. Over residues 564–576 the composition is skewed to low complexity; sequence SEPSSPELETLST. One can recognise a (+)RNA virus helicase ATP-binding domain in the interval 682-838; sequence IVNADCVISN…TIIPDETDTA (157 aa). Residues 711-975 are ATP-dependent helicase; that stretch reads LVDGVAGCGK…VTRHKKTFRY (265 aa). 714 to 721 contributes to the ATP binding site; it reads GVAGCGKT. Positions 839–993 constitute a (+)RNA virus helicase C-terminal domain; that stretch reads DTTFRSPQDV…DLIAECLARV (155 aa).

Belongs to the bromoviridae replication protein 1a family. As to quaternary structure, interacts with RNA-directed RNA polymerase 2a.

The protein resides in the host endoplasmic reticulum membrane. Involved in the virus replication. Contains a helicase domain and a methyltransferase domain. The methyltransferase domain is probably involved in viral RNA capping. Involved in the formation of ER membrane spherular invaginations in which RNA replication complexes form. The sequence is that of Replication protein 1a from Canna (Florist's daisy).